A 337-amino-acid chain; its full sequence is Anthranilate phosphoribosyltransferase (337 aa).

Residues Gly-81, 84–85, Ser-89, 91–94, 109–117, and Ala-121 each bind 5-phospho-alpha-D-ribose 1-diphosphate; these read GD, NVST, and KHGNRAASS. Anthranilate is bound at residue Gly-81. Ser-93 lines the Mg(2+) pocket. Anthranilate is bound at residue Asn-112. Residue Arg-167 participates in anthranilate binding. Mg(2+) contacts are provided by Asp-226 and Glu-227.

The protein belongs to the anthranilate phosphoribosyltransferase family. As to quaternary structure, homodimer. It depends on Mg(2+) as a cofactor.

It catalyses the reaction N-(5-phospho-beta-D-ribosyl)anthranilate + diphosphate = 5-phospho-alpha-D-ribose 1-diphosphate + anthranilate. It functions in the pathway amino-acid biosynthesis; L-tryptophan biosynthesis; L-tryptophan from chorismate: step 2/5. Catalyzes the transfer of the phosphoribosyl group of 5-phosphorylribose-1-pyrophosphate (PRPP) to anthranilate to yield N-(5'-phosphoribosyl)-anthranilate (PRA). This is Anthranilate phosphoribosyltransferase from Methylobacterium nodulans (strain LMG 21967 / CNCM I-2342 / ORS 2060).